The chain runs to 488 residues: UDP-N-acetylmuramate--L-alanine ligase (488 aa).

Residue 127 to 133 participates in ATP binding; it reads GTHGKTT.

This sequence belongs to the MurCDEF family.

The protein resides in the cytoplasm. The enzyme catalyses UDP-N-acetyl-alpha-D-muramate + L-alanine + ATP = UDP-N-acetyl-alpha-D-muramoyl-L-alanine + ADP + phosphate + H(+). It functions in the pathway cell wall biogenesis; peptidoglycan biosynthesis. Functionally, cell wall formation. The chain is UDP-N-acetylmuramate--L-alanine ligase from Shewanella baltica (strain OS223).